A 616-amino-acid polypeptide reads, in one-letter code: Chaperone protein HscA homolog (616 aa).

It belongs to the heat shock protein 70 family.

Its function is as follows. Chaperone involved in the maturation of iron-sulfur cluster-containing proteins. Has a low intrinsic ATPase activity which is markedly stimulated by HscB. The sequence is that of Chaperone protein HscA homolog from Aliivibrio fischeri (strain ATCC 700601 / ES114) (Vibrio fischeri).